The chain runs to 247 residues: Ribosomal RNA small subunit methyltransferase G (247 aa).

S-adenosyl-L-methionine contacts are provided by Gly86, Leu91, and Arg154.

It belongs to the methyltransferase superfamily. RNA methyltransferase RsmG family.

Its subcellular location is the cytoplasm. Its function is as follows. Specifically methylates the N7 position of a guanine in 16S rRNA. The chain is Ribosomal RNA small subunit methyltransferase G from Leptospira biflexa serovar Patoc (strain Patoc 1 / Ames).